A 150-amino-acid chain; its full sequence is MQDKIPTIAELRELSLRLLTKIPYLKMLVLFGSRATGNINANSDWDFAVLYDEEKYNLYIQNNPLAAFVIPGILGEIFKINSDKIDIVELNHCSKLIAHFVARDGKVLYEEPGDEFDKFQQRVLLSNTEIKKIEKTKLENIENFLQRWGV.

The GSX(10)DXD motif motif lies at Gly-32–Asp-46. Residues Asp-44 and Asp-46 contribute to the active site. Mg(2+)-binding residues include Asp-44, Asp-46, and Asp-86.

The protein belongs to the MntA antitoxin family. As to quaternary structure, forms a complex with HepT, probably MntA(1):HepT(2) in vivo; can only be purified when both 'Arg-102' and 'Tyr-109' (or 'His-107' and 'Tyr-109') of HepThave been mutated. The fully di-AMPylated HepT homodimer is not found in a complex with MntA. Requires Mg(2+) as cofactor.

The enzyme catalyses L-tyrosyl-[protein] + ATP = O-(5'-adenylyl)-L-tyrosyl-[protein] + diphosphate. It catalyses the reaction O-(5'-adenylyl)-L-tyrosyl-[protein] + ATP = O-[5'-(adenylyl-(5'-&gt;3')-adenylyl)]-L-tyrosyl-[protein] + diphosphate. Antitoxin component of a type VII toxin-antitoxin (TA) system. Upon cloning in E.coli neutralizes the effect of cognate toxin HepT. Neutralization is mostly due to di-AMPylation of toxin by this enzyme. Successively di-AMPylates HepT on 'Tyr-109'. In vitro will use ATP, dATP, GTP, dGTP, TTP or UTP to generate a mono-modified protein, but requires a purine nucleotide for the second modification reaction (ATP, dATP or GTP). The chain is Protein adenylyltransferase MntA from Aphanizomenon flos-aquae (strain 2012/KM1/D3).